The chain runs to 355 residues: 6-aminohexanoate-oligomer endohydrolase (355 aa).

Residue T267 is the Nucleophile of the active site.

This sequence belongs to the peptidase S58 family. Heterotetramer composed of 4 alpha/beta heterodimers. Exists at the monomer/dimer/trimer equilibrium in aqueous solution. Expressed as an inactive precursor that is cleaved autocatalytically at Asn266/Thr267 to generate an active enzyme composed of an alpha subunit and a beta subunit.

The catalysed reaction is [N-(6-aminohexanoyl)]n + H2O = [N-(6-aminohexanoyl)]n-x + [N-(6-aminohexanoyl)]x.. The protein operates within xenobiotic degradation; nylon-6 oligomer degradation. Involved in the degradation of nylon-6 oligomers. Degrades cyclic and linear oligomers of 6-aminohexanoate (Ahx) with a degree of polymerization greater than three by an endo-type mode. Cannot use Ahx cyclic dimer or the Ahx linear dimer. The protein is 6-aminohexanoate-oligomer endohydrolase of Paenarthrobacter ureafaciens.